A 353-amino-acid polypeptide reads, in one-letter code: GTPase Obg (353 aa).

The 159-residue stretch at 1–159 (MKFLDEAKVY…RWIWLRLKLI (159 aa)) folds into the Obg domain. The OBG-type G domain occupies 160-327 (ADAGLVGLPN…ALRALAAVIG (168 aa)). Residues 166–173 (GLPNAGKS), 191–195 (FTTLH), 212–215 (DIPG), 279–282 (NKID), and 308–310 (SGV) each bind GTP. Residues serine 173 and threonine 193 each contribute to the Mg(2+) site.

This sequence belongs to the TRAFAC class OBG-HflX-like GTPase superfamily. OBG GTPase family. In terms of assembly, monomer. The cofactor is Mg(2+).

The protein localises to the cytoplasm. Functionally, an essential GTPase which binds GTP, GDP and possibly (p)ppGpp with moderate affinity, with high nucleotide exchange rates and a fairly low GTP hydrolysis rate. Plays a role in control of the cell cycle, stress response, ribosome biogenesis and in those bacteria that undergo differentiation, in morphogenesis control. This is GTPase Obg from Rhodopseudomonas palustris (strain BisB5).